The primary structure comprises 292 residues: 5,10-methylenetetrahydrofolate reductase (292 aa).

Glu28 functions as the Proton donor/acceptor in the catalytic mechanism. Thr59 serves as a coordination point for NADH. Positions 60, 62, 88, 118, 119, 120, 132, 152, 156, 165, 168, 171, and 172 each coordinate FAD. Residue Asp120 coordinates (6S)-5-methyl-5,6,7,8-tetrahydrofolate. Gln183 contributes to the NADH binding site. Gln183 serves as a coordination point for (6S)-5-methyl-5,6,7,8-tetrahydrofolate.

The protein belongs to the methylenetetrahydrofolate reductase family. The cofactor is FAD.

The enzyme catalyses (6S)-5-methyl-5,6,7,8-tetrahydrofolate + NAD(+) = (6R)-5,10-methylene-5,6,7,8-tetrahydrofolate + NADH + H(+). The protein operates within one-carbon metabolism; tetrahydrofolate interconversion. It participates in amino-acid biosynthesis; L-methionine biosynthesis via de novo pathway. Catalyzes the NADH-dependent reduction of 5,10-methylenetetrahydrofolate to 5-methyltetrahydrofolate. Is required to provide the methyl group necessary for methionine synthetase to convert homocysteine to methionine; the methyl group is given by 5-methyltetrahydrofolate. The chain is 5,10-methylenetetrahydrofolate reductase (metF) from Buchnera aphidicola subsp. Acyrthosiphon pisum (strain APS) (Acyrthosiphon pisum symbiotic bacterium).